We begin with the raw amino-acid sequence, 181 residues long: Cytidylate kinase (181 aa).

Residue 7–15 (GPPGSGTTS) participates in ATP binding.

This sequence belongs to the cytidylate kinase family. Type 2 subfamily.

The protein resides in the cytoplasm. The enzyme catalyses CMP + ATP = CDP + ADP. It carries out the reaction dCMP + ATP = dCDP + ADP. This chain is Cytidylate kinase, found in Methanoculleus marisnigri (strain ATCC 35101 / DSM 1498 / JR1).